We begin with the raw amino-acid sequence, 258 residues long: Shikimate dehydrogenase (NADP(+)) (258 aa).

Residues 14 to 16 and T61 each bind shikimate; that span reads SES. K65 serves as the catalytic Proton acceptor. Positions 86 and 101 each coordinate shikimate. Residues 125–129 and L211 contribute to the NADP(+) site; that span reads GSGGS. A shikimate-binding site is contributed by Y213. An NADP(+)-binding site is contributed by G234.

Belongs to the shikimate dehydrogenase family. In terms of assembly, homodimer.

The catalysed reaction is shikimate + NADP(+) = 3-dehydroshikimate + NADPH + H(+). It participates in metabolic intermediate biosynthesis; chorismate biosynthesis; chorismate from D-erythrose 4-phosphate and phosphoenolpyruvate: step 4/7. In terms of biological role, involved in the biosynthesis of the chorismate, which leads to the biosynthesis of aromatic amino acids. Catalyzes the reversible NADPH linked reduction of 3-dehydroshikimate (DHSA) to yield shikimate (SA). The sequence is that of Shikimate dehydrogenase (NADP(+)) from Clostridium botulinum (strain Loch Maree / Type A3).